The sequence spans 467 residues: ATP-dependent protease ATPase subunit HslU (467 aa).

ATP is bound by residues V22 and 64–69; that span reads GVGKTE. The tract at residues 149–192 is disordered; sequence QTNNPLESLFGGAIPNFGQNNEDEEEPPTEEIKTKRSEIKRQLE. Over residues 178-192 the composition is skewed to basic and acidic residues; the sequence is EEIKTKRSEIKRQLE. ATP is bound by residues D280, E345, and R417.

This sequence belongs to the ClpX chaperone family. HslU subfamily. A double ring-shaped homohexamer of HslV is capped on each side by a ring-shaped HslU homohexamer. The assembly of the HslU/HslV complex is dependent on binding of ATP.

It is found in the cytoplasm. Functionally, ATPase subunit of a proteasome-like degradation complex; this subunit has chaperone activity. The binding of ATP and its subsequent hydrolysis by HslU are essential for unfolding of protein substrates subsequently hydrolyzed by HslV. HslU recognizes the N-terminal part of its protein substrates and unfolds these before they are guided to HslV for hydrolysis. This is ATP-dependent protease ATPase subunit HslU from Staphylococcus aureus (strain MW2).